The primary structure comprises 600 residues: ATP-dependent RNA helicase DDX55 (600 aa).

Residues 9-37 carry the Q motif motif; it reads WESLPVPLHPQVLGALRELGFPYMTPVQS. Residues 40 to 223 form the Helicase ATP-binding domain; the sequence is IPLFMRNKDV…RAGLRNPVRV (184 aa). 53–60 serves as a coordination point for ATP; sequence AVTGSGKT. The short motif at 171–174 is the DEAD box element; the sequence is DEAD. The Helicase C-terminal domain occupies 254–402; the sequence is KFNQLVHFLR…EMKPQRNTAD (149 aa). Residues 500–513 show a composition bias toward basic and acidic residues; that stretch reads EQQRREKTENEGRR. The disordered stretch occupies residues 500–550; the sequence is EQQRREKTENEGRRKFIKNKAWSKQKAKKEKKKKMNEKRKREEGSDIEDED. Residues 514–537 show a composition bias toward basic residues; it reads KFIKNKAWSKQKAKKEKKKKMNEK. The tract at residues 533–562 is important for nuclear localization; the sequence is KMNEKRKREEGSDIEDEDMEELLNDTRLLK. 2 positions are modified to phosphoserine: Ser544 and Ser594.

This sequence belongs to the DEAD box helicase family. DDX55/SPB4 subfamily. In terms of assembly, interacts with 28S rRNA. Interacts with double-stranded RNA substrates in vitro; the interaction stimulates ATPase activity.

The protein resides in the nucleus. The protein localises to the nucleoplasm. The catalysed reaction is ATP + H2O = ADP + phosphate + H(+). Its function is as follows. Probable ATP-binding RNA helicase. Has ATPase activity and is involved in the maturation of precursor large subunit rRNAs. The sequence is that of ATP-dependent RNA helicase DDX55 from Homo sapiens (Human).